Consider the following 272-residue polypeptide: D-aminoacyl-tRNA deacylase (272 aa).

It belongs to the DtdA deacylase family. Monomer. The cofactor is Zn(2+).

The enzyme catalyses a D-aminoacyl-tRNA + H2O = a tRNA + a D-alpha-amino acid + H(+). It catalyses the reaction glycyl-tRNA(Ala) + H2O = tRNA(Ala) + glycine + H(+). D-aminoacyl-tRNA deacylase with broad substrate specificity. By recycling D-aminoacyl-tRNA to D-amino acids and free tRNA molecules, this enzyme counteracts the toxicity associated with the formation of D-aminoacyl-tRNA entities in vivo. This Hyperthermus butylicus (strain DSM 5456 / JCM 9403 / PLM1-5) protein is D-aminoacyl-tRNA deacylase.